We begin with the raw amino-acid sequence, 829 residues long: Cation/H(+) antiporter 14 (829 aa).

Transmembrane regions (helical) follow at residues 48–68 (YAMP…RLLY), 77–97 (GMIS…FGQS), 117–137 (SNLG…ASII), 145–165 (ILIG…TVLF), 180–200 (ISTV…TVLA), 215–235 (NCSI…RMFL), 240–260 (LASV…FFVC), 281–301 (IPFF…EVLG), 329–349 (LEMF…GLQT), 361–383 (IIEA…ASAY), 392–412 (FSLA…CVMW), and 425–445 (LLII…VCLY). S827 carries the post-translational modification Phosphoserine.

Belongs to the monovalent cation:proton antiporter 2 (CPA2) transporter (TC 2.A.37) family. CHX (TC 2.A.37.4) subfamily. In terms of tissue distribution, preferentially expressed in pollen but also detected in vegetative tissues like leaf trichomes and root vascular tissues.

Its subcellular location is the membrane. May operate as a cation/H(+) antiporter. The sequence is that of Cation/H(+) antiporter 14 (CHX14) from Arabidopsis thaliana (Mouse-ear cress).